Here is a 405-residue protein sequence, read N- to C-terminus: L-rhamnonate dehydratase (405 aa).

Substrate-binding residues include His33 and Arg59. Asp226, Glu252, and Glu280 together coordinate Mg(2+). His329 serves as the catalytic Proton acceptor. Residue Glu349 coordinates substrate.

The protein belongs to the mandelate racemase/muconate lactonizing enzyme family. RhamD subfamily. Homooctamer; tetramer of dimers. Mg(2+) is required as a cofactor.

The enzyme catalyses L-rhamnonate = 2-dehydro-3-deoxy-L-rhamnonate + H2O. Catalyzes the dehydration of L-rhamnonate to 2-keto-3-deoxy-L-rhamnonate (KDR). In Escherichia coli O127:H6 (strain E2348/69 / EPEC), this protein is L-rhamnonate dehydratase.